Here is a 394-residue protein sequence, read N- to C-terminus: Putative fimbrial assembly protein FimD, serogroup D (394 aa).

The chain is Putative fimbrial assembly protein FimD, serogroup D (fimD) from Dichelobacter nodosus (Bacteroides nodosus).